Reading from the N-terminus, the 574-residue chain is Putative diflavin flavoprotein A 3 (574 aa).

Residues 43–236 (QNGTTYNSFL…PSVKMIATGH (194 aa)) form a zinc metallo-hydrolase region. Positions 92, 94, 96, 159, 178, and 236 each coordinate Fe cation. In terms of domain architecture, Flavodoxin-like spans 265-409 (IGVFYVSEYG…DLGQWVTRDR (145 aa)). Positions 410-574 (SIKAMKSLGA…VHHRKVGNHY (165 aa)) are flavodoxin-reductase-like.

The protein in the N-terminal section; belongs to the zinc metallo-hydrolase group 3 family. It in the C-terminal section; belongs to the flavodoxin reductase family. Requires Fe cation as cofactor.

Functionally, mediates electron transfer from NADH to oxygen, reducing it to water. This modular protein has 3 redox cofactors, in other organisms the same activity requires 2 or 3 proteins. This Nostoc sp. (strain PCC 7120 / SAG 25.82 / UTEX 2576) protein is Putative diflavin flavoprotein A 3 (dfa3).